The following is a 390-amino-acid chain: Succinyl-diaminopimelate desuccinylase (390 aa).

H75 contacts Zn(2+). D77 is a catalytic residue. D108 provides a ligand contact to Zn(2+). Residue E141 is the Proton acceptor of the active site. Zn(2+) contacts are provided by E142, E170, and H359.

Belongs to the peptidase M20A family. DapE subfamily. In terms of assembly, homodimer. Requires Zn(2+) as cofactor. Co(2+) serves as cofactor.

The catalysed reaction is N-succinyl-(2S,6S)-2,6-diaminopimelate + H2O = (2S,6S)-2,6-diaminopimelate + succinate. It participates in amino-acid biosynthesis; L-lysine biosynthesis via DAP pathway; LL-2,6-diaminopimelate from (S)-tetrahydrodipicolinate (succinylase route): step 3/3. Functionally, catalyzes the hydrolysis of N-succinyl-L,L-diaminopimelic acid (SDAP), forming succinate and LL-2,6-diaminopimelate (DAP), an intermediate involved in the bacterial biosynthesis of lysine and meso-diaminopimelic acid, an essential component of bacterial cell walls. In Maricaulis maris (strain MCS10) (Caulobacter maris), this protein is Succinyl-diaminopimelate desuccinylase.